The chain runs to 84 residues: Trefoil factor 1 (84 aa).

The N-terminal stretch at 1-24 (MATMENKVICALVLVSMLALGTLA) is a signal peptide. The 44-residue stretch at 29 to 72 (ETCTVAPRERQNCGFPGVTPSQCANKGCCFDDTVRGVPWCFYPN) folds into the P-type domain. 3 disulfides stabilise this stretch: Cys-31–Cys-57, Cys-41–Cys-56, and Cys-51–Cys-68.

Heterodimer with GKN2; disulfide linked. In terms of tissue distribution, found in stomach, with highest levels in the upper gastric mucosal cells (at protein level). Detected in goblet cells of the small and large intestine and rectum, small submucosal glands in the esophagus, mucous acini of the sublingual gland, submucosal glands of the trachea, and epithelial cells lining the exocrine pancreatic ducts but not in the remainder of the pancreas (at protein level). Scattered expression is detected in the epithelial cells of the gallbladder and submucosal glands of the vagina, and weak expression is observed in the bronchial goblet cells of the pseudostratified epithelia in the respiratory system (at protein level). Detected in urine (at protein level). Strongly expressed in breast cancer but at low levels in normal mammary tissue. It is regulated by estrogen in MCF-7 cells. Strong expression found in normal gastric mucosa and in the regenerative tissues surrounding ulcerous lesions of gastrointestinal tract, but lower expression found in gastric cancer (at protein level).

The protein resides in the secreted. In terms of biological role, stabilizer of the mucous gel overlying the gastrointestinal mucosa that provides a physical barrier against various noxious agents. May inhibit the growth of calcium oxalate crystals in urine. This Homo sapiens (Human) protein is Trefoil factor 1 (TFF1).